The primary structure comprises 147 residues: UPF0306 protein YhbP (147 aa).

It belongs to the UPF0306 family.

This is UPF0306 protein YhbP from Shigella sonnei (strain Ss046).